Consider the following 149-residue polypeptide: Nucleoside diphosphate kinase (149 aa).

ATP-binding residues include Lys-9, Phe-57, Arg-85, Thr-91, Arg-102, and Asn-112. His-115 functions as the Pros-phosphohistidine intermediate in the catalytic mechanism.

This sequence belongs to the NDK family. In terms of assembly, homotetramer. Mg(2+) is required as a cofactor.

It localises to the cytoplasm. It carries out the reaction a 2'-deoxyribonucleoside 5'-diphosphate + ATP = a 2'-deoxyribonucleoside 5'-triphosphate + ADP. The enzyme catalyses a ribonucleoside 5'-diphosphate + ATP = a ribonucleoside 5'-triphosphate + ADP. In terms of biological role, major role in the synthesis of nucleoside triphosphates other than ATP. The ATP gamma phosphate is transferred to the NDP beta phosphate via a ping-pong mechanism, using a phosphorylated active-site intermediate. The protein is Nucleoside diphosphate kinase of Staphylococcus aureus (strain MSSA476).